The sequence spans 99 residues: Cell division protein FtsB (99 aa).

Residues M1 to V3 are Cytoplasmic-facing. A helical membrane pass occupies residues F4 to F21. At G22–N99 the chain is on the periplasmic side. The stretch at Y29 to L53 forms a coiled coil.

It belongs to the FtsB family. Part of a complex composed of FtsB, FtsL and FtsQ.

It localises to the cell inner membrane. Essential cell division protein. May link together the upstream cell division proteins, which are predominantly cytoplasmic, with the downstream cell division proteins, which are predominantly periplasmic. In Colwellia psychrerythraea (strain 34H / ATCC BAA-681) (Vibrio psychroerythus), this protein is Cell division protein FtsB.